The following is a 345-amino-acid chain: MIETDRLIAPSTQGTQEEALECALRPKVLDEYVGQEKARGQLEIFINAARGRSEALDHVLLFGPPGLGKTTLAHIIAKEMGVNMRQTSGPVLERAGDLAALLTNLEPNDVLFIDEIHRLSPVVEEILYPAMEDYRLDIMIGEGPAARSVRLDLPPFTLVGATTRAGMLTNPLRDRFGIVSRLEFYTADELARIVHRSAGLLEVAIQQEGALEIARRSRGTPRIANRLLRRVRDYAQVKSDGVVSADIADAALKMLDVDKLGFDVMDRKLLLAVLEKFDGGPVGLDNLAAAIGEERDTIEDVLEPYLIQQGYLMRTPRGRIATQQAYQHFGLAIPGKIGTGELWQQ.

The large ATPase domain (RuvB-L) stretch occupies residues 4-185 (TDRLIAPSTQ…FGIVSRLEFY (182 aa)). Residues Leu-24, Arg-25, Gly-66, Lys-69, Thr-70, Thr-71, 132–134 (EDY), Arg-175, Tyr-185, and Arg-222 contribute to the ATP site. Thr-70 contacts Mg(2+). The segment at 186–256 (TADELARIVH…IADAALKMLD (71 aa)) is small ATPAse domain (RuvB-S). The interval 259-345 (KLGFDVMDRK…KIGTGELWQQ (87 aa)) is head domain (RuvB-H). Positions 295, 314, and 319 each coordinate DNA.

Belongs to the RuvB family. In terms of assembly, homohexamer. Forms an RuvA(8)-RuvB(12)-Holliday junction (HJ) complex. HJ DNA is sandwiched between 2 RuvA tetramers; dsDNA enters through RuvA and exits via RuvB. An RuvB hexamer assembles on each DNA strand where it exits the tetramer. Each RuvB hexamer is contacted by two RuvA subunits (via domain III) on 2 adjacent RuvB subunits; this complex drives branch migration. In the full resolvosome a probable DNA-RuvA(4)-RuvB(12)-RuvC(2) complex forms which resolves the HJ.

Its subcellular location is the cytoplasm. It catalyses the reaction ATP + H2O = ADP + phosphate + H(+). Functionally, the RuvA-RuvB-RuvC complex processes Holliday junction (HJ) DNA during genetic recombination and DNA repair, while the RuvA-RuvB complex plays an important role in the rescue of blocked DNA replication forks via replication fork reversal (RFR). RuvA specifically binds to HJ cruciform DNA, conferring on it an open structure. The RuvB hexamer acts as an ATP-dependent pump, pulling dsDNA into and through the RuvAB complex. RuvB forms 2 homohexamers on either side of HJ DNA bound by 1 or 2 RuvA tetramers; 4 subunits per hexamer contact DNA at a time. Coordinated motions by a converter formed by DNA-disengaged RuvB subunits stimulates ATP hydrolysis and nucleotide exchange. Immobilization of the converter enables RuvB to convert the ATP-contained energy into a lever motion, pulling 2 nucleotides of DNA out of the RuvA tetramer per ATP hydrolyzed, thus driving DNA branch migration. The RuvB motors rotate together with the DNA substrate, which together with the progressing nucleotide cycle form the mechanistic basis for DNA recombination by continuous HJ branch migration. Branch migration allows RuvC to scan DNA until it finds its consensus sequence, where it cleaves and resolves cruciform DNA. The protein is Holliday junction branch migration complex subunit RuvB of Methylobacillus flagellatus (strain ATCC 51484 / DSM 6875 / VKM B-1610 / KT).